The chain runs to 219 residues: Ribosome hibernation promotion factor (219 aa).

Belongs to the HPF/YfiA ribosome-associated protein family. Long HPF subfamily. In terms of assembly, interacts with 100S ribosomes.

The protein resides in the cytoplasm. Its function is as follows. Required for dimerization of active 70S ribosomes into 100S ribosomes in stationary phase; 100S ribosomes are translationally inactive and sometimes present during exponential growth. This Mycobacterium tuberculosis (strain ATCC 25618 / H37Rv) protein is Ribosome hibernation promotion factor.